The sequence spans 457 residues: MSAGKIVQIIGAVIDVEFPQDAVPKVYDALKVESGLTLEVQQQLGGGVVRCIALGTSDGLKRGLKVENTNNPIQVPVGTKTLGRIMNVLGEPIDEQGAIGEEERWAIHRSAPSYEEQSNSTELLETGIKVIDLICPFAKGGKVGLFGGAGVGKTVNMMELIRNIAIEHSGYSVFAGVGERTREGNDFYHEMKDSNVLDKVSLVYGQMNEPPGNRLRVALTGLTMAEKFRDEGRDVLFFVDNIYRYTLAGTEVSALLGRMPSAVGYQPTLAEEMGVLQERITSTKTGSITSVQAVYVPADDLTDPSPATTFAHLDSTVVLSRQIASLGIYPAVDPLDSTSRQLDPLVVGQEHYDVARGVQGILQRYKELKDIIAILGMDELSEEDKLVVARARKIERFLSQPFFVAEVFTGSPGKYVTLKDTIRGFKGILDGEYDHIPEQAFYMVGSIDEVLEKAKNM.

An ATP-binding site is contributed by 147–154 (GGAGVGKT).

This sequence belongs to the ATPase alpha/beta chains family. F-type ATPases have 2 components, CF(1) - the catalytic core - and CF(0) - the membrane proton channel. CF(1) has five subunits: alpha(3), beta(3), gamma(1), delta(1), epsilon(1). CF(0) has three main subunits: a(1), b(2) and c(9-12). The alpha and beta chains form an alternating ring which encloses part of the gamma chain. CF(1) is attached to CF(0) by a central stalk formed by the gamma and epsilon chains, while a peripheral stalk is formed by the delta and b chains.

The protein resides in the cell inner membrane. It catalyses the reaction ATP + H2O + 4 H(+)(in) = ADP + phosphate + 5 H(+)(out). Its function is as follows. Produces ATP from ADP in the presence of a proton gradient across the membrane. The catalytic sites are hosted primarily by the beta subunits. The sequence is that of ATP synthase subunit beta from Haemophilus influenzae (strain 86-028NP).